The sequence spans 480 residues: NADH-quinone oxidoreductase subunit N (480 aa).

The next 13 membrane-spanning stretches (helical) occupy residues 10 to 30 (FISIGPLLIVLMTALIIILIE), 40 to 60 (WSSLISIGGLTLSIFAVWGGI), 80 to 100 (FFTVFFLVIGIGASLLATAFF), 117 to 137 (AVFGLILIGAAADLLTLFLGI), 166 to 186 (LMGSIVAGFLLYGIALVYGAI), 208 to 228 (VLFFSGIAMITLGLAFKAALV), 246 to 266 (TAFMAVGTKVGVFAAFVRLFF), 276 to 296 (WNQVIDTLVYATLIYANFVAL), 304 to 324 (FFAYSSISHAGFLMIPVVIGN), 330 to 350 (ALTFYLVIYAIATFGCFAVLA), 374 to 394 (LASLLSICLLTLAGIPPTAGF), 409 to 431 (YYGLVIVGLLTTILSSYYYLRII), and 452 to 472 (IVGTTSFIAIIILSFYPAPFL).

It belongs to the complex I subunit 2 family. As to quaternary structure, NDH-1 is composed of 14 different subunits. Subunits NuoA, H, J, K, L, M, N constitute the membrane sector of the complex.

The protein resides in the cell inner membrane. The catalysed reaction is a quinone + NADH + 5 H(+)(in) = a quinol + NAD(+) + 4 H(+)(out). NDH-1 shuttles electrons from NADH, via FMN and iron-sulfur (Fe-S) centers, to quinones in the respiratory chain. The immediate electron acceptor for the enzyme in this species is believed to be ubiquinone. Couples the redox reaction to proton translocation (for every two electrons transferred, four hydrogen ions are translocated across the cytoplasmic membrane), and thus conserves the redox energy in a proton gradient. This Protochlamydia amoebophila (strain UWE25) protein is NADH-quinone oxidoreductase subunit N.